A 148-amino-acid polypeptide reads, in one-letter code: Putative pre-16S rRNA nuclease (148 aa).

It belongs to the YqgF nuclease family.

The protein resides in the cytoplasm. In terms of biological role, could be a nuclease involved in processing of the 5'-end of pre-16S rRNA. In Chromohalobacter salexigens (strain ATCC BAA-138 / DSM 3043 / CIP 106854 / NCIMB 13768 / 1H11), this protein is Putative pre-16S rRNA nuclease.